A 108-amino-acid polypeptide reads, in one-letter code: UPF0060 membrane protein KPN78578_15550 (108 aa).

4 helical membrane-spanning segments follow: residues 6–26 (LLFF…WLWL), 29–49 (GATP…VWLL), 61–81 (AAYG…VDGV), and 86–106 (YDWA…AGWG).

It belongs to the UPF0060 family.

Its subcellular location is the cell inner membrane. This is UPF0060 membrane protein KPN78578_15550 from Klebsiella pneumoniae subsp. pneumoniae (strain ATCC 700721 / MGH 78578).